The chain runs to 129 residues: Glycine cleavage system H protein (129 aa).

One can recognise a Lipoyl-binding domain in the interval 24 to 106 (SYTVGITEHA…FGDGWFFRVM (83 aa)). N6-lipoyllysine is present on K65.

Belongs to the GcvH family. In terms of assembly, the glycine cleavage system is composed of four proteins: P, T, L and H. The cofactor is (R)-lipoate.

In terms of biological role, the glycine cleavage system catalyzes the degradation of glycine. The H protein shuttles the methylamine group of glycine from the P protein to the T protein. In Shewanella frigidimarina (strain NCIMB 400), this protein is Glycine cleavage system H protein.